The chain runs to 226 residues: tRNA (guanine-N(1)-)-methyltransferase (226 aa).

S-adenosyl-L-methionine is bound by residues Gly112 and 132 to 137 (IGDYVL).

This sequence belongs to the RNA methyltransferase TrmD family. In terms of assembly, homodimer.

It localises to the cytoplasm. The enzyme catalyses guanosine(37) in tRNA + S-adenosyl-L-methionine = N(1)-methylguanosine(37) in tRNA + S-adenosyl-L-homocysteine + H(+). Its function is as follows. Specifically methylates guanosine-37 in various tRNAs. This Christiangramia forsetii (strain DSM 17595 / CGMCC 1.15422 / KT0803) (Gramella forsetii) protein is tRNA (guanine-N(1)-)-methyltransferase.